Consider the following 37-residue polypeptide: Large ribosomal subunit protein bL36 (37 aa).

This sequence belongs to the bacterial ribosomal protein bL36 family.

The chain is Large ribosomal subunit protein bL36 from Thioalkalivibrio sulfidiphilus (strain HL-EbGR7).